Here is a 459-residue protein sequence, read N- to C-terminus: Cobyrinate a,c-diamide synthase (459 aa).

In terms of domain architecture, GATase cobBQ-type spans 252-446; it reads TLALADDEAF…LHVHFAQRPE (195 aa). The active-site Nucleophile is Cys-334.

Belongs to the CobB/CbiA family. In terms of assembly, monomer. It depends on Mg(2+) as a cofactor.

It carries out the reaction cob(II)yrinate + 2 L-glutamine + 2 ATP + 2 H2O = cob(II)yrinate a,c diamide + 2 L-glutamate + 2 ADP + 2 phosphate + 2 H(+). The protein operates within cofactor biosynthesis; adenosylcobalamin biosynthesis; cob(II)yrinate a,c-diamide from sirohydrochlorin (anaerobic route): step 10/10. Catalyzes the ATP-dependent amidation of the two carboxylate groups at positions a and c of cobyrinate, using either L-glutamine or ammonia as the nitrogen source. Is able to use other nucleotide triphosphates as substrate, such as GTP or UTP, although less efficiently than ATP. The polypeptide is Cobyrinate a,c-diamide synthase (Salmonella typhimurium (strain LT2 / SGSC1412 / ATCC 700720)).